A 298-amino-acid polypeptide reads, in one-letter code: MADHTTKEQKSFSFLAHSPSFDHSSLSYPLFDWEEDLLALQENSGSQAFPFTTTSLPLPDLEPLSEDVLNSYSSASWNETEQNRGDGASSEKKRENGTVKETTKKRKINERHREHSVRIISDITTYTTSSAPTTLSKETVSRYFYMPITQAAIALNVGLTLLKRRCRELGIRRWPHRKLMSLNTLISNVKELQKMEGEENAEKLQDALEMLEKEKRTIEDLPDLEFKDKTKRLRQACFKANHKRKKKRSLKSDQSQVPSCSSSGSVPSDESVDEAGMESDEEMKYLLCGFSSEFTSGL.

2 stretches are compositionally biased toward basic and acidic residues: residues 1–10 (MADHTTKEQK) and 81–102 (EQNRGDGASSEKKRENGTVKET). 2 disordered regions span residues 1-22 (MADHTTKEQKSFSFLAHSPSFD) and 73-112 (SSASWNETEQNRGDGASSEKKRENGTVKETTKKRKINERH). Residues 121–203 (SDITTYTTSS…KMEGEENAEK (83 aa)) form the RWP-RK domain. A coiled-coil region spans residues 188-222 (NVKELQKMEGEENAEKLQDALEMLEKEKRTIEDLP). Residues 241–279 (NHKRKKKRSLKSDQSQVPSCSSSGSVPSDESVDEAGMES) are disordered. The segment covering 252 to 269 (SDQSQVPSCSSSGSVPSD) has biased composition (low complexity). The span at 270–279 (ESVDEAGMES) shows a compositional bias: acidic residues.

It localises to the nucleus. In terms of biological role, putative transcription factor. The protein is Protein RKD2 (RKD2) of Arabidopsis thaliana (Mouse-ear cress).